A 658-amino-acid polypeptide reads, in one-letter code: Transcription factor cep-1 (658 aa).

Residues 238–428 mediate DNA binding; the sequence is EEWLTFEVKK…RDWKNFCEKR (191 aa). Cys319, His322, Cys375, and Cys379 together coordinate Zn(2+). The tract at residues 450-477 is disordered; it reads QSSLHSGPSSPEKVTDTSQMFQSTSSSS. Over residues 466–476 the composition is skewed to low complexity; it reads TSQMFQSTSSS. Residues 535-564 are required for tertiary structure stability of the protein; it reads QYGLQRQVKLSEKEYSKFVAFFAKEGENEI.

It belongs to the p53 family. Homodimer. Interacts (via C-terminus domain) with prmt-5; not methylated by prmt-5. Interacts with cbp-1 (via HAT domain); cep-1 transcriptional activity may be inhibited by interaction with methylated cbp-1. Component of a complex that contains prmt-5 and cbp-1. Interacts with ape-1; the interaction inhibits pro-apoptotic activity of cep-1. Zn(2+) is required as a cofactor. Post-translationally, phosphorylated in response to IR-induced DNA damage which is thought to be mediated by akt-1.

The protein resides in the nucleus. In terms of biological role, transcriptional activator that binds the same DNA consensus sequence as p53. Has a role in normal development to ensure proper meiotic chromosome segregation. Promotes apoptosis under conditions of cellular and genotoxic stress in response to DNA damage, hypoxia, or starvation. However, not required for DNA repair in response to UV-C or to regulate cell-cycle progression. Regulates germline apoptosis in response to DNA damage. Required for induction of ced-13 in response to DNA damage. Its pro-apoptotic activity is inhibited when bound to ape-1 in vitro. Regulates germline proliferation by activating phg-1. Regulates DNA damage-induced apoptosis by inducing transcription of the programmed cell death activator egl-1. Negatively regulates lifespan. The sequence is that of Transcription factor cep-1 from Caenorhabditis briggsae.